We begin with the raw amino-acid sequence, 218 residues long: Guanylate kinase (218 aa).

Residues 15 to 194 (GMMLVLSSPS…SIADVRAILR (180 aa)) enclose the Guanylate kinase-like domain. 22 to 29 (SPSGAGKT) is a binding site for ATP.

Belongs to the guanylate kinase family.

The protein localises to the cytoplasm. The enzyme catalyses GMP + ATP = GDP + ADP. Functionally, essential for recycling GMP and indirectly, cGMP. The protein is Guanylate kinase of Rhodospirillum rubrum (strain ATCC 11170 / ATH 1.1.1 / DSM 467 / LMG 4362 / NCIMB 8255 / S1).